A 433-amino-acid polypeptide reads, in one-letter code: Serine hydroxymethyltransferase (433 aa).

121-123 (AHV) serves as a coordination point for (6S)-5,6,7,8-tetrahydrofolate. Lysine 227 is modified (N6-(pyridoxal phosphate)lysine). Residue glutamate 243 participates in (6S)-5,6,7,8-tetrahydrofolate binding.

Belongs to the SHMT family. Homodimer. Pyridoxal 5'-phosphate serves as cofactor.

It is found in the cytoplasm. The enzyme catalyses 5,10-methylenetetrahydrosulfopterin + glycine + H2O = tetrahydrosulfopterin + L-serine. It participates in amino-acid biosynthesis; glycine biosynthesis; glycine from L-serine: step 1/1. With respect to regulation, is completely inhibited by addition of NaCNBH(3) in vitro; this reagent is a known inhibitor of PLP enzymes, that reduces the internal aldimine of PLP to the catalytically inactive and stable secondary amine. Is also inhibited by L-cysteine, which forms a thiazolidine complex with the active site PLP. Functionally, catalyzes the reversible interconversion of serine and glycine with the modified folate sulfopterin serving as the one-carbon carrier. Cannot use tetrahydrofolate (THF or H4PteGlu) as the pteridine substrate. Also exhibits a pteridine-independent aldolase activity toward beta-hydroxyamino acids, producing glycine and aldehydes, via a retro-aldol mechanism. Thus, is able to catalyze the cleavage of both allo-threonine and beta-phenylserine. This is Serine hydroxymethyltransferase from Saccharolobus solfataricus (strain ATCC 35092 / DSM 1617 / JCM 11322 / P2) (Sulfolobus solfataricus).